Consider the following 151-residue polypeptide: Hemoglobin-2 (151 aa).

N-acetylthreonine is present on T2. The Globin domain maps to 3 to 148 (TLTNPQKAAI…ICKTLGDYMK (146 aa)). Position 97 (H97) interacts with heme b.

This sequence belongs to the globin family. As to quaternary structure, homotetramer.

It is found in the cytoplasm. This Phacoides pectinatus (Thick lucine) protein is Hemoglobin-2.